The primary structure comprises 332 residues: Probable class II chitinase ARB_00204 (332 aa).

The signal sequence occupies residues 1-18; the sequence is MKTPFTILAALTVATTLA. Residues 19–331 form the GH18 domain; the sequence is DVPDEWDIIE…NPHRKYLDSF (313 aa). Glu-118 functions as the Proton donor in the catalytic mechanism. N-linked (GlcNAc...) asparagine glycosylation is present at Asn-245.

The protein belongs to the glycosyl hydrolase 18 family. Chitinase class II subfamily.

It localises to the secreted. The enzyme catalyses Random endo-hydrolysis of N-acetyl-beta-D-glucosaminide (1-&gt;4)-beta-linkages in chitin and chitodextrins.. In terms of biological role, degrades chitin and chitotriose. This is Probable class II chitinase ARB_00204 from Arthroderma benhamiae (strain ATCC MYA-4681 / CBS 112371) (Trichophyton mentagrophytes).